The primary structure comprises 877 residues: GTPase activating protein homolog 2 (877 aa).

Positions 14 to 285 (FKFTDNLWDG…SVEMIDITND (272 aa)) constitute an F-BAR domain. Residues 130-214 (QEGIKLKQDM…SNCDEEYREQ (85 aa)) are a coiled coil. The 187-residue stretch at 374–560 (VSLDELMNRQ…TLIKQIPPPL (187 aa)) folds into the Rho-GAP domain. 3 disordered regions span residues 589–612 (DQLS…GSGS), 644–704 (LPPL…AEPT), and 749–800 (AATP…LAST). Low complexity-rich tracts occupy residues 593–612 (NDDN…GSGS), 653–676 (SGSG…SPTT), and 749–779 (AATP…STST). Positions 780-800 (IKTSSPDRTTPLTSSPPLAST) are enriched in polar residues.

The protein resides in the cytoplasm. The protein localises to the contractile vacuole. Its function is as follows. Rho GTPase-activating protein involved in the signal transduction pathway. Regulator of the contractile vacuole network as well as involved in driving vacuole emptying. The polypeptide is GTPase activating protein homolog 2 (mgp2) (Dictyostelium discoideum (Social amoeba)).